Consider the following 874-residue polypeptide: AP-1 complex subunit gamma-1 (874 aa).

Positions 761–873 (TVAKSHTVYT…QDQTDWAQPS (113 aa)) constitute a GAE domain.

This sequence belongs to the adaptor complexes large subunit family. Adaptor protein complex 1 (AP-1) is a heterotetramer composed of two large adaptins (gamma-type subunit APL4 and beta-type subunit APL2), a medium adaptin (mu-type subunit APM1) and a small adaptin (sigma-type subunit APS1). AP-1 interacts with clathrin.

The protein localises to the cytoplasmic vesicle. It localises to the clathrin-coated vesicle membrane. It is found in the golgi apparatus. Functionally, adaptins are components of the adaptor complexes which link clathrin to receptors in coated vesicles. Clathrin-associated protein complexes are believed to interact with the cytoplasmic tails of membrane proteins, leading to their selection and concentration. The AP-1 complex interacts directly with clathrin. Required for apical growth extension. This chain is AP-1 complex subunit gamma-1 (APL4), found in Mycosarcoma maydis (Corn smut fungus).